The primary structure comprises 287 residues: Protease HtpX (287 aa).

2 consecutive transmembrane segments (helical) span residues 4–24 (VFLL…VMSI) and 33–53 (GGLL…SLAI). H139 serves as a coordination point for Zn(2+). The active site involves E140. H143 provides a ligand contact to Zn(2+). The next 2 helical transmembrane spans lie at 154 to 174 (LIQG…AGII) and 195 to 215 (GVVF…VAYF). E220 contacts Zn(2+).

Belongs to the peptidase M48B family. Zn(2+) serves as cofactor.

It localises to the cell inner membrane. This Shewanella denitrificans (strain OS217 / ATCC BAA-1090 / DSM 15013) protein is Protease HtpX.